A 457-amino-acid polypeptide reads, in one-letter code: Bifunctional protein GlmU (457 aa).

Residues 1–232 (MAKVAAIVLA…PMEVMGVNDR (232 aa)) are pyrophosphorylase. UDP-N-acetyl-alpha-D-glucosamine contacts are provided by residues 9 to 12 (LAAG), K23, Q75, and 80 to 81 (GT). D105 is a binding site for Mg(2+). UDP-N-acetyl-alpha-D-glucosamine-binding residues include G142, E157, N172, and N230. N230 contacts Mg(2+). The segment at 233–253 (VQLAEAGRIIRVRINKALMVA) is linker. The tract at residues 254–457 (GTTIIDPETT…NKEGWKLKNK (204 aa)) is N-acetyltransferase. The UDP-N-acetyl-alpha-D-glucosamine site is built by R336 and K354. The active-site Proton acceptor is H366. The UDP-N-acetyl-alpha-D-glucosamine site is built by Y369 and N380. Acetyl-CoA contacts are provided by residues 389–390 (NY), S408, A426, and R443.

In the N-terminal section; belongs to the N-acetylglucosamine-1-phosphate uridyltransferase family. The protein in the C-terminal section; belongs to the transferase hexapeptide repeat family. Homotrimer. Mg(2+) serves as cofactor.

It localises to the cytoplasm. It carries out the reaction alpha-D-glucosamine 1-phosphate + acetyl-CoA = N-acetyl-alpha-D-glucosamine 1-phosphate + CoA + H(+). It catalyses the reaction N-acetyl-alpha-D-glucosamine 1-phosphate + UTP + H(+) = UDP-N-acetyl-alpha-D-glucosamine + diphosphate. It participates in nucleotide-sugar biosynthesis; UDP-N-acetyl-alpha-D-glucosamine biosynthesis; N-acetyl-alpha-D-glucosamine 1-phosphate from alpha-D-glucosamine 6-phosphate (route II): step 2/2. Its pathway is nucleotide-sugar biosynthesis; UDP-N-acetyl-alpha-D-glucosamine biosynthesis; UDP-N-acetyl-alpha-D-glucosamine from N-acetyl-alpha-D-glucosamine 1-phosphate: step 1/1. The protein operates within bacterial outer membrane biogenesis; LPS lipid A biosynthesis. Its function is as follows. Catalyzes the last two sequential reactions in the de novo biosynthetic pathway for UDP-N-acetylglucosamine (UDP-GlcNAc). The C-terminal domain catalyzes the transfer of acetyl group from acetyl coenzyme A to glucosamine-1-phosphate (GlcN-1-P) to produce N-acetylglucosamine-1-phosphate (GlcNAc-1-P), which is converted into UDP-GlcNAc by the transfer of uridine 5-monophosphate (from uridine 5-triphosphate), a reaction catalyzed by the N-terminal domain. This is Bifunctional protein GlmU from Geotalea daltonii (strain DSM 22248 / JCM 15807 / FRC-32) (Geobacter daltonii).